The chain runs to 346 residues: NADH-ubiquinone oxidoreductase chain 2 (346 aa).

Transmembrane regions (helical) follow at residues 25-45 (HWVL…PLIS), 60-80 (FLTQ…NAWA), 95-115 (CLLL…HFWF), 124-144 (LMTA…LLLM), 149-169 (LNPA…GWMG), 178-195 (ILAF…IILV), 200-219 (LALL…FMAL), 247-267 (VLLS…WLII), 274-294 (EMTP…FFYL), and 326-346 (AILA…HAIV).

The protein belongs to the complex I subunit 2 family.

It is found in the mitochondrion inner membrane. The enzyme catalyses a ubiquinone + NADH + 5 H(+)(in) = a ubiquinol + NAD(+) + 4 H(+)(out). In terms of biological role, core subunit of the mitochondrial membrane respiratory chain NADH dehydrogenase (Complex I) that is believed to belong to the minimal assembly required for catalysis. Complex I functions in the transfer of electrons from NADH to the respiratory chain. The immediate electron acceptor for the enzyme is believed to be ubiquinone. The sequence is that of NADH-ubiquinone oxidoreductase chain 2 (MT-ND2) from Anas capensis (Cape teal).